The following is a 400-amino-acid chain: Keratin, type I cytoskeletal 19 (400 aa).

Residues 1-79 (MTSYSYRQSS…TASDGLLAGN (79 aa)) form a head region. Position 7 is an omega-N-methylarginine (Arg7). Phosphoserine occurs at positions 14 and 22. Arg24 is modified (asymmetric dimethylarginine; alternate). Position 24 is an omega-N-methylarginine; alternate (Arg24). Arg32 carries the omega-N-methylarginine modification. Phosphoserine is present on residues Ser35 and Ser40. Omega-N-methylarginine is present on residues Arg43 and Arg51. Ser57 and Ser72 each carry phosphoserine. Residues 80–115 (EKLTMQNLNDRLASYLDKVRALEAANGELEVKIRDW) are coil 1A. The IF rod domain occupies 80–391 (EKLTMQNLND…SLLEGQEDHY (312 aa)). Residues 116–133 (YQKQGPGPSRDYSHYYTT) form a linker 1 region. Residues 134 to 225 (IQDLRDKILG…KNHEEEISTL (92 aa)) are coil 1B. The tract at residues 226-248 (RGQVGGQVSVEVDSAPGTDLAKI) is linker 12. Positions 244–390 (DLAKILSDMR…RSLLEGQEDH (147 aa)) are necessary for interaction with PNN. The interval 249–387 (LSDMRSQYEV…ATYRSLLEGQ (139 aa)) is coil 2. Phosphothreonine is present on Thr323. The tract at residues 388 to 400 (EDHYNNLSASKVL) is rod-like helical tail. Tyr391 carries the post-translational modification Phosphotyrosine. Phosphoserine is present on residues Ser395 and Ser397.

This sequence belongs to the intermediate filament family. In terms of assembly, heterotetramer of two type I and two type II keratins. Interacts with PNN and the actin-binding domain of DMD. Interacts with HCV core protein. (Microbial infection) Interacts with hepatitis C virus/HCV core protein. As to expression, expressed in a defined zone of basal keratinocytes in the deep outer root sheath of hair follicles. Also observed in sweat gland and mammary gland ductal and secretory cells, bile ducts, gastrointestinal tract, bladder urothelium, oral epithelia, esophagus, ectocervical epithelium (at protein level). Expressed in epidermal basal cells, in nipple epidermis and a defined region of the hair follicle. Also seen in a subset of vascular wall cells in both the veins and artery of human umbilical cord, and in umbilical cord vascular smooth muscle. Observed in muscle fibers accumulating in the costameres of myoplasm at the sarcolemma in structures that contain dystrophin and spectrin.

Involved in the organization of myofibers. Together with KRT8, helps to link the contractile apparatus to dystrophin at the costameres of striated muscle. This is Keratin, type I cytoskeletal 19 (KRT19) from Homo sapiens (Human).